A 262-amino-acid chain; its full sequence is Hydroxyethylthiazole kinase (262 aa).

Position 50 (Met-50) interacts with substrate. 2 residues coordinate ATP: Arg-125 and Thr-171. Gly-198 contacts substrate.

Belongs to the Thz kinase family. Mg(2+) is required as a cofactor.

The catalysed reaction is 5-(2-hydroxyethyl)-4-methylthiazole + ATP = 4-methyl-5-(2-phosphooxyethyl)-thiazole + ADP + H(+). Its pathway is cofactor biosynthesis; thiamine diphosphate biosynthesis; 4-methyl-5-(2-phosphoethyl)-thiazole from 5-(2-hydroxyethyl)-4-methylthiazole: step 1/1. Catalyzes the phosphorylation of the hydroxyl group of 4-methyl-5-beta-hydroxyethylthiazole (THZ). The protein is Hydroxyethylthiazole kinase of Escherichia coli O6:H1 (strain CFT073 / ATCC 700928 / UPEC).